We begin with the raw amino-acid sequence, 501 residues long: Splicing factor 3A subunit 3 (501 aa).

Residue methionine 1 is modified to N-acetylmethionine. A phosphoserine mark is found at serine 54 and serine 121. The short motif at 175–179 (KERKN) is the Nuclear localization signal element. A phosphoserine mark is found at serine 295 and serine 299. Basic and acidic residues predominate over residues 343-354 (ENVQRKQARTGE). The interval 343-374 (ENVQRKQARTGEEREEEEEEQISESESEDEEN) is disordered. The span at 355–374 (EREEEEEEQISESESEDEEN) shows a compositional bias: acidic residues. Residues serine 365, serine 367, and serine 369 each carry the phosphoserine modification. The Matrin-type zinc-finger motif lies at 406-437 (YNCEICGNYTYRGPKAFQRHFAEWRHAHGMRC). At threonine 475 the chain carries Phosphothreonine.

Belongs to the SF3A3 family. Component of the 17S U2 SnRNP complex, a ribonucleoprotein complex that contains small nuclear RNA (snRNA) U2 and a number of specific proteins. Part of the SF3A subcomplex of the 17S U2 SnRNP complex which is composed of three subunits; SF3A3/SAP61, SF3A2/SAP62 and SF3A1/SAP114. SF3A associates with the splicing factor SF3B and a 12S RNA unit to form the mature 17S U2 small nuclear ribonucleoprotein complex (17S U2 snRNP). Identified in the spliceosome 'E' complex, a precursor of the spliceosome 'A' complex. Identified in the spliceosome 'A' and 'B' complexes. Identified in the spliceosome 'C' complex. In terms of tissue distribution, ubiquitous.

The protein resides in the nucleus speckle. It localises to the nucleus. Functionally, component of the 17S U2 SnRNP complex of the spliceosome, a large ribonucleoprotein complex that removes introns from transcribed pre-mRNAs. The 17S U2 SnRNP complex (1) directly participates in early spliceosome assembly and (2) mediates recognition of the intron branch site during pre-mRNA splicing by promoting the selection of the pre-mRNA branch-site adenosine, the nucleophile for the first step of splicing. Within the 17S U2 SnRNP complex, SF3A3 is part of the SF3A subcomplex that contributes to the assembly of the 17S U2 snRNP, and the subsequent assembly of the pre-spliceosome 'E' complex and the pre-catalytic spliceosome 'A' complex. Involved in pre-mRNA splicing as a component of pre-catalytic spliceosome 'B' complexes. In Homo sapiens (Human), this protein is Splicing factor 3A subunit 3 (SF3A3).